Here is a 109-residue protein sequence, read N- to C-terminus: Somatostatin-2 (109 aa).

An N-terminal signal peptide occupies residues 1–16 (MQFLASLVSFLLVVWS). Positions 17–80 (VKATALPVED…EPLENKLEER (64 aa)) are excised as a propeptide. C98 and C109 are disulfide-bonded.

The protein belongs to the somatostatin family.

Its subcellular location is the secreted. Somatostatin inhibits the release of somatotropin. This is Somatostatin-2 (sst2) from Protopterus annectens (African lungfish).